Reading from the N-terminus, the 120-residue chain is Immunoglobulin kappa variable 2D-28 (120 aa).

The signal sequence occupies residues 1-19 (MRLPAQLLGLLMLWVSGSS). An Ig-like domain is found at 20-120 (GDIVMTQSPL…YYCMQALQTP (101 aa)). Residues 21-43 (DIVMTQSPLSLPVTPGEPASISC) are framework-1. A disulfide bond links C43 and C113. The complementarity-determining-1 stretch occupies residues 44 to 59 (RSSQSLLHSNGYNYLD). The interval 60–74 (WYLQKPGQSPQLLIY) is framework-2. The tract at residues 75-81 (LGSNRAS) is complementarity-determining-2. A framework-3 region spans residues 82-113 (GVPDRFSGSGSGTDFTLKISRVEAEDVGVYYC). Positions 114-120 (MQALQTP) are complementarity-determining-3.

In terms of assembly, immunoglobulins are composed of two identical heavy chains and two identical light chains; disulfide-linked.

The protein localises to the secreted. It is found in the cell membrane. Functionally, v region of the variable domain of immunoglobulin light chains that participates in the antigen recognition. Immunoglobulins, also known as antibodies, are membrane-bound or secreted glycoproteins produced by B lymphocytes. In the recognition phase of humoral immunity, the membrane-bound immunoglobulins serve as receptors which, upon binding of a specific antigen, trigger the clonal expansion and differentiation of B lymphocytes into immunoglobulins-secreting plasma cells. Secreted immunoglobulins mediate the effector phase of humoral immunity, which results in the elimination of bound antigens. The antigen binding site is formed by the variable domain of one heavy chain, together with that of its associated light chain. Thus, each immunoglobulin has two antigen binding sites with remarkable affinity for a particular antigen. The variable domains are assembled by a process called V-(D)-J rearrangement and can then be subjected to somatic hypermutations which, after exposure to antigen and selection, allow affinity maturation for a particular antigen. This chain is Immunoglobulin kappa variable 2D-28, found in Homo sapiens (Human).